Consider the following 377-residue polypeptide: MADNSHTRVVVGMSGGVDSSVTALLLKRQGYDVVGVFMKNWDDTDENGVCTATEDYKDVAKVASKIGIPYYSVNFEKEYWDRVFKYFIAEYKKGRTPNPDVICNKEIKFKAFIEYANQLGADYVATGHYADVKRDENGRMHLMRAKDQHKDQTYFLSQLDYKQLDKVMFPLAGYTKPEIRKIAEEAGLATADKKDSVGICFIGEDGHFREFLSQYIPAQPGNMETLDGKVVGQHMGLMYYTIGQRRGLGLGGNKESNEPWFVIGKDMKKNVLYVGQGYENSHLYATHLEASDIHWVDDVVSRYGRDFHCTAKFRYRQTDVGVTVHLSDDDQMVTVEFDDPARAITPGQAVVFYDGEECLGSAIIDRAYSHDRQLQYV.

ATP is bound by residues 12-19 (GMSGGVDS) and Met-38. Positions 98–100 (NPD) are interaction with target base in tRNA. The Nucleophile role is filled by Cys-103. Cys-103 and Cys-200 are disulfide-bonded. Gly-127 serves as a coordination point for ATP. Residues 150–152 (KDQ) are interaction with tRNA. The Cysteine persulfide intermediate role is filled by Cys-200. The tract at residues 314-315 (RY) is interaction with tRNA.

This sequence belongs to the MnmA/TRMU family.

It localises to the cytoplasm. The enzyme catalyses S-sulfanyl-L-cysteinyl-[protein] + uridine(34) in tRNA + AH2 + ATP = 2-thiouridine(34) in tRNA + L-cysteinyl-[protein] + A + AMP + diphosphate + H(+). Functionally, catalyzes the 2-thiolation of uridine at the wobble position (U34) of tRNA, leading to the formation of s(2)U34. This chain is tRNA-specific 2-thiouridylase MnmA, found in Limosilactobacillus reuteri (strain DSM 20016) (Lactobacillus reuteri).